We begin with the raw amino-acid sequence, 460 residues long: MCSVTGVLIIKPENYEKIEKKLIQILKRAEDRGRDSFGVIVIEKDGSVRKVKALGRPSTQEEKLYGILDENSKVIIANNRAEPTTEYVRQKTEEDIQPFEGERYIVTHNGIIANDLELEKKYNVIRRTKIDSAVVPPILDKYWNGEIEQLKKILNDIKGSFAFIIGDKKRPNRIYIAQNFKPVYMMYDRELGAIFFTSLDDYFDASAFDSVTKLDPYSIVEVNDNLEIRKIQLLDKKIKKVLVIASGGLDSTVAATYLLRQGYEITLLHFNYHHKAEEREREAVKKIAEYLQVPLIEIDTDLFKIIGHTTLLKGGGEIVKDRLGEEGAEFAHEWVPARNLIFYSVALALAEAYGYDAIASGINLEEAGAYPDNEMEFVRLFAKLSPYATGPNKKVEVMMPVGNLVKHEIVKLGVEIGAPLHLTWSCYEGGQKHCGKCGPCYMRKMAFRINGLNDPVEYEN.

Residue Cys-2 is the For GATase activity of the active site. The 224-residue stretch at 2–225 folds into the Glutamine amidotransferase type-2 domain; it reads CSVTGVLIIK…PYSIVEVNDN (224 aa). 245–255 contacts ATP; sequence ASGGLDSTVAA. Positions 426, 434, 437, and 440 each coordinate Zn(2+).

It belongs to the QueC family. The cofactor is Zn(2+).

The catalysed reaction is 7-carboxy-7-deazaguanine + NH4(+) + ATP = 7-cyano-7-deazaguanine + ADP + phosphate + H2O + H(+). It functions in the pathway purine metabolism; 7-cyano-7-deazaguanine biosynthesis. Functionally, catalyzes the ATP-dependent conversion of 7-carboxy-7-deazaguanine (CDG) to 7-cyano-7-deazaguanine (preQ(0)). The polypeptide is 7-cyano-7-deazaguanine synthase 2 (queC2) (Sulfurisphaera tokodaii (strain DSM 16993 / JCM 10545 / NBRC 100140 / 7) (Sulfolobus tokodaii)).